Here is a 538-residue protein sequence, read N- to C-terminus: Mitochondrial distribution and morphology protein 34 (538 aa).

One can recognise an SMP-LTD domain in the interval 1–224 (MSFRFDRSVF…LPTALFNMSQ (224 aa)). Disordered regions lie at residues 26 to 55 (ALNP…RKSG) and 231 to 251 (DGSR…NQPS).

The protein belongs to the MDM34 family. As to quaternary structure, component of the ER-mitochondria encounter structure (ERMES) or MDM complex, composed of MMM1, MDM10, MDM12 and MDM34.

The protein resides in the mitochondrion outer membrane. In terms of biological role, component of the ERMES/MDM complex, which serves as a molecular tether to connect the endoplasmic reticulum (ER) and mitochondria. Components of this complex are involved in the control of mitochondrial shape and protein biogenesis, and function in nonvesicular lipid trafficking between the ER and mitochondria. MDM34 is required for the interaction of the ER-resident membrane protein MMM1 and the outer mitochondrial membrane-resident beta-barrel protein MDM10. The chain is Mitochondrial distribution and morphology protein 34 from Candida glabrata (strain ATCC 2001 / BCRC 20586 / JCM 3761 / NBRC 0622 / NRRL Y-65 / CBS 138) (Yeast).